Here is a 63-residue protein sequence, read N- to C-terminus: ATP synthase membrane subunit K, mitochondrial (63 aa).

Residues 15–37 (TMRGRANVAKATWASLGLVYVLV) form a helical membrane-spanning segment.

F-type ATPases have 2 components, CF(1) - the catalytic core - and CF(0) - the membrane proton channel. CF(1) has five subunits: alpha(3), beta(3), gamma(1), delta(1), epsilon(1). CF(0) has three main subunits: a, b and c. The ATP synthase complex/complex V exists as a monomeric and a dimeric supercomplex that helps shape mitochondrial cristae to optimize proton flow.

The protein resides in the mitochondrion membrane. In terms of biological role, mitochondrial membrane ATP synthase (F(1)F(0) ATP synthase or Complex V) produces ATP from ADP in the presence of a proton gradient across the membrane which is generated by electron transport complexes of the respiratory chain. F-type ATPases consist of two structural domains, F(1) - containing the extramembraneous catalytic core and F(0) - containing the membrane proton channel, linked together by a central stalk and a peripheral stalk. During catalysis, ATP synthesis in the catalytic domain of F(1) is coupled via a rotary mechanism of the central stalk subunits to proton translocation. ATP5MK is a minor subunit of the mitochondrial membrane ATP synthase required for dimerization of the ATP synthase complex and as such regulates ATP synthesis in the mitochondria. In Drosophila melanogaster (Fruit fly), this protein is ATP synthase membrane subunit K, mitochondrial.